The chain runs to 652 residues: Zinc finger protein 432 (652 aa).

The 72-residue stretch at L8–P79 folds into the KRAB domain. Residue Y41 is modified to 3'-nitrotyrosine. An ADP-ribosylserine mark is found at S139 and S164. C2H2-type zinc fingers lie at residues H205–H227, Y233–H255, F261–H283, Y289–H311, Y317–H339, Y345–H367, Y373–H395, Y401–H423, Y429–H451, Y457–H479, Y485–H507, Y513–H535, F541–H563, K567–H591, Y597–H619, and F625–H647. Residue S246 is modified to ADP-ribosylserine. ADP-ribosylserine is present on S330. An ADP-ribosylserine modification is found at S414.

It belongs to the krueppel C2H2-type zinc-finger protein family. In terms of assembly, interacts with PARP1 and several chromatin remodeling proteins; the interaction with PARP1 reshapes ZNF432 interacting proteins. Interacts with TRIM28; the interaction is independent of PARP1.

The protein resides in the nucleus. Homologous recombination repressor that functions as a poly(ADP-ribose) (PAR) reader regulating DNA damage response and PARP inhibition. Once recruited to DNA lesions via DNA-, in a PAR-dependent mechanism, stimulates PARP1 activity. Binds preferentially ssDNA and inhibits EXO1-mediated resection, probably through a PAR-independent DNA-binding mechanism. This chain is Zinc finger protein 432, found in Homo sapiens (Human).